The chain runs to 234 residues: Phosphoribosylaminoimidazole-succinocarboxamide synthase (234 aa).

This sequence belongs to the SAICAR synthetase family.

The enzyme catalyses 5-amino-1-(5-phospho-D-ribosyl)imidazole-4-carboxylate + L-aspartate + ATP = (2S)-2-[5-amino-1-(5-phospho-beta-D-ribosyl)imidazole-4-carboxamido]succinate + ADP + phosphate + 2 H(+). Its pathway is purine metabolism; IMP biosynthesis via de novo pathway; 5-amino-1-(5-phospho-D-ribosyl)imidazole-4-carboxamide from 5-amino-1-(5-phospho-D-ribosyl)imidazole-4-carboxylate: step 1/2. This chain is Phosphoribosylaminoimidazole-succinocarboxamide synthase, found in Streptococcus agalactiae serotype III (strain NEM316).